The primary structure comprises 143 residues: Mini-ribonuclease 3 (143 aa).

Asp-35 is an active-site residue.

The protein belongs to the MrnC RNase family. As to quaternary structure, homodimer. Mg(2+) serves as cofactor.

The protein localises to the cytoplasm. Its function is as follows. Involved in correct processing of both the 5' and 3' ends of 23S rRNA precursor. Processes 30S rRNA precursor transcript even in absence of ribonuclease 3 (Rnc); Rnc processes 30S rRNA into smaller rRNA precursors. This chain is Mini-ribonuclease 3, found in Synechocystis sp. (strain ATCC 27184 / PCC 6803 / Kazusa).